The chain runs to 157 residues: UPF0127 protein TK1120 (157 aa).

It belongs to the UPF0127 family.

The sequence is that of UPF0127 protein TK1120 from Thermococcus kodakarensis (strain ATCC BAA-918 / JCM 12380 / KOD1) (Pyrococcus kodakaraensis (strain KOD1)).